Here is a 303-residue protein sequence, read N- to C-terminus: 5'-3' exonuclease (303 aa).

Positions 179–262 constitute a 5'-3' exonuclease domain; the sequence is ISPAQWVDVK…LATITTEIEA (84 aa).

In terms of biological role, 5'-3' exonuclease acting preferentially on double-stranded DNA. The polypeptide is 5'-3' exonuclease (Halalkalibacterium halodurans (strain ATCC BAA-125 / DSM 18197 / FERM 7344 / JCM 9153 / C-125) (Bacillus halodurans)).